A 257-amino-acid polypeptide reads, in one-letter code: Putative aldolase class 2 protein CC_1201 (257 aa).

Zn(2+)-binding residues include H114, H116, and H177.

Belongs to the aldolase class II family. Zn(2+) serves as cofactor.

This Caulobacter vibrioides (strain ATCC 19089 / CIP 103742 / CB 15) (Caulobacter crescentus) protein is Putative aldolase class 2 protein CC_1201.